Reading from the N-terminus, the 334-residue chain is DNA-directed RNA polymerase subunit alpha (334 aa).

The tract at residues 1–233 (MADQTISNVL…NLFTPLVSQE (233 aa)) is alpha N-terminal domain (alpha-NTD). Residues 263–334 (DNENSYNLYN…QLKKRFKIQL (72 aa)) form an alpha C-terminal domain (alpha-CTD) region.

Belongs to the RNA polymerase alpha chain family. In plastids the minimal PEP RNA polymerase catalytic core is composed of four subunits: alpha, beta, beta', and beta''. When a (nuclear-encoded) sigma factor is associated with the core the holoenzyme is formed, which can initiate transcription.

The protein resides in the plastid. The protein localises to the chloroplast. It carries out the reaction RNA(n) + a ribonucleoside 5'-triphosphate = RNA(n+1) + diphosphate. DNA-dependent RNA polymerase catalyzes the transcription of DNA into RNA using the four ribonucleoside triphosphates as substrates. This Chaetosphaeridium globosum (Charophycean green alga) protein is DNA-directed RNA polymerase subunit alpha.